We begin with the raw amino-acid sequence, 748 residues long: Chondroadherin-like protein (748 aa).

Positions 1-29 (MERPQSSIWVFMLLLFMVLLQSPAWHVAA) are cleaved as a signal peptide. Positions 30 to 61 (QRCPQTCVCDNSRRHVTCRHQNLTEVPNTIPE) constitute an LRRNT 1 domain. N-linked (GlcNAc...) asparagine glycosylation is present at N51. 9 LRR repeats span residues 85–107 (PHLT…AFRG), 108–131 (LGRL…ALDG), 132–155 (LGSL…TFGA), 156–179 (LGSL…AFQG), 181–203 (LRTR…ALAG), 204–227 (LPAL…ALSQ), 229–252 (RSLA…GLAL), 253–275 (PGLR…AFAH), and 276–299 (CPRL…QVPG). The LRRCT 1 domain occupies 309–357 (NPLWCACHARPLLEWLVRARVRSDGACRGPRRLRGEALDTLRPSDLRCP). A disordered region spans residues 352-389 (SDLRCPGDAAAGDGDGDEDEDRPAGPRAPPLRSPHGEA). Residues 394–428 (PCPPACACVAETRHSTCDGRGLQAVPRGFPNDTQL) form the LRRNT 2 domain. C395 and C410 are oxidised to a cystine. LRR repeat units lie at residues 423 to 446 (PNDT…AFPG), 448 to 470 (RHLV…ALAG), 471 to 494 (LDRL…ALEG), 496 to 518 (PNLG…ALRA), 519 to 542 (LPTL…DLAG), 544 to 566 (RALR…ALGP), 567 to 590 (AREL…ALEG), 591 to 614 (LPAL…AFQP), 616 to 639 (GRSL…AFSG), and 641 to 665 (GKGL…GLSG). N625 carries N-linked (GlcNAc...) asparagine glycosylation. In terms of domain architecture, LRRCT 2 spans 674–722 (NPFHCDCQLLPLHRWLTGLNLRVGATCATPPSVRGQKVKVAAPVFEACP). Intrachain disulfides connect C678–C721 and C680–C700. Positions 728-748 (KAKRTPTSRGSARRTPSLSRH) are disordered. Polar residues predominate over residues 734 to 748 (TSRGSARRTPSLSRH).

The protein belongs to the small leucine-rich proteoglycan (SLRP) family. SLRP class IV subfamily. In terms of assembly, associates with collagen and binds to collagen fibrils. Expressed in cartilage, including articular knee cartilage, where it localizes to the extracellular space in the area immediately surrounding the chondrocytes, not detected in any other tissues (at protein level).

It localises to the secreted. The protein resides in the extracellular space. The protein localises to the extracellular matrix. Its function is as follows. Potential negative modulator of chondrocyte differentiation. Inhibits collagen fibrillogenesis in vitro. May influence chondrocyte's differentiation by acting on its cellular collagenous microenvironment. This is Chondroadherin-like protein (Chadl) from Mus musculus (Mouse).